The primary structure comprises 172 residues: Large ribosomal subunit protein uL10 (172 aa).

Belongs to the universal ribosomal protein uL10 family. Part of the ribosomal stalk of the 50S ribosomal subunit. The N-terminus interacts with L11 and the large rRNA to form the base of the stalk. The C-terminus forms an elongated spine to which L12 dimers bind in a sequential fashion forming a multimeric L10(L12)X complex.

Its function is as follows. Forms part of the ribosomal stalk, playing a central role in the interaction of the ribosome with GTP-bound translation factors. This Rhodopseudomonas palustris (strain BisB5) protein is Large ribosomal subunit protein uL10.